A 300-amino-acid chain; its full sequence is tRNA pseudouridine synthase B (300 aa).

D38 acts as the Nucleophile in catalysis.

This sequence belongs to the pseudouridine synthase TruB family. Type 1 subfamily.

It catalyses the reaction uridine(55) in tRNA = pseudouridine(55) in tRNA. Its function is as follows. Responsible for synthesis of pseudouridine from uracil-55 in the psi GC loop of transfer RNAs. This is tRNA pseudouridine synthase B from Dehalococcoides mccartyi (strain ATCC BAA-2100 / JCM 16839 / KCTC 5957 / BAV1).